Here is a 367-residue protein sequence, read N- to C-terminus: Peptide chain release factor 1 (367 aa).

Residue Gln-238 is modified to N5-methylglutamine.

It belongs to the prokaryotic/mitochondrial release factor family. Post-translationally, methylated by PrmC. Methylation increases the termination efficiency of RF1.

The protein localises to the cytoplasm. Peptide chain release factor 1 directs the termination of translation in response to the peptide chain termination codons UAG and UAA. This Dictyoglomus turgidum (strain DSM 6724 / Z-1310) protein is Peptide chain release factor 1.